The primary structure comprises 210 residues: Redox-sensing transcriptional repressor Rex (210 aa).

Positions 17 to 56 form a DNA-binding region, H-T-H motif; the sequence is KYHRYLYELLKNDVDRISSKELSEKIGFTASQIRQDLNCF. 91-96 contacts NAD(+); sequence GAGNIG.

It belongs to the transcriptional regulatory Rex family. In terms of assembly, homodimer.

It is found in the cytoplasm. Its function is as follows. Modulates transcription in response to changes in cellular NADH/NAD(+) redox state. The sequence is that of Redox-sensing transcriptional repressor Rex from Clostridium botulinum (strain ATCC 19397 / Type A).